A 294-amino-acid chain; its full sequence is 4-hydroxy-tetrahydrodipicolinate synthase (294 aa).

Residue threonine 45 participates in pyruvate binding. The active-site Proton donor/acceptor is the tyrosine 133. Catalysis depends on lysine 161, which acts as the Schiff-base intermediate with substrate. A pyruvate-binding site is contributed by isoleucine 203.

It belongs to the DapA family. As to quaternary structure, homotetramer; dimer of dimers.

Its subcellular location is the cytoplasm. The catalysed reaction is L-aspartate 4-semialdehyde + pyruvate = (2S,4S)-4-hydroxy-2,3,4,5-tetrahydrodipicolinate + H2O + H(+). It participates in amino-acid biosynthesis; L-lysine biosynthesis via DAP pathway; (S)-tetrahydrodipicolinate from L-aspartate: step 3/4. Catalyzes the condensation of (S)-aspartate-beta-semialdehyde [(S)-ASA] and pyruvate to 4-hydroxy-tetrahydrodipicolinate (HTPA). This Buchnera aphidicola subsp. Baizongia pistaciae (strain Bp) protein is 4-hydroxy-tetrahydrodipicolinate synthase.